A 203-amino-acid chain; its full sequence is Non-histone protein 10 (203 aa).

Serine 2 carries the post-translational modification N-acetylserine. 2 disordered regions span residues lysine 78–proline 97 and isoleucine 161–asparagine 203. The HMG box DNA-binding region spans proline 94 to asparagine 158.

In terms of assembly, component of the chromatin-remodeling INO80 complex, at least composed of ARP4, ARP5, ARP8, RVB1, RVB2, TAF14, NHP10, IES1, IES3, IES4, IES6, ACT1, IES2, IES5 and INO80.

Its subcellular location is the nucleus. In terms of biological role, probably involved in transcription regulation via its interaction with the INO80 complex, a chromatin remodeling complex. In Saccharomyces cerevisiae (strain ATCC 204508 / S288c) (Baker's yeast), this protein is Non-histone protein 10 (NHP10).